Reading from the N-terminus, the 434-residue chain is MAKIGFVSLGCPKALVDSEQILSRLKALGYETSPSYEEAELVIVNTCGFINEAVEESLEAIGEALKENGKVVVTGCLGARPEKIRERHPQVLAVTGPGEVERVLEAVQEVLPAPRDPFLDLIPPQVKLTPRHYAYVKLSEGCDHRCSFCIIPKLRGRLRSRDAADVLAEAARLVATGTKELLLVAQDLSAYGVDLGHRESLWGDRPVRAELKDLLTHMAELGVWIRLHYVYPYPHVKDLLPLMAEGKVLPYLDVPLQHASPRILRLMRRPGGYESHLKTLKAWREVVPELALRSTFIVGFPGETEEDFQILLDFLEEAELDRVGVFAYSPVEGAEANRLPDPVPEEVKEERKARLLEVQARVSLRKNQRFVGKTLEVLVDELPEPGLAVGRTYRDAPGVDGVVYVETDGTVRVGERIPVRILRADTYDLHGVQA.

One can recognise an MTTase N-terminal domain in the interval Ala-2–Pro-112. 6 residues coordinate [4Fe-4S] cluster: Cys-11, Cys-47, Cys-76, Cys-142, Cys-146, and Cys-149. Positions Leu-128 to Arg-365 constitute a Radical SAM core domain. A TRAM domain is found at Gln-368–Ala-434.

Belongs to the methylthiotransferase family. RimO subfamily. [4Fe-4S] cluster serves as cofactor.

It is found in the cytoplasm. The enzyme catalyses L-aspartate(89)-[ribosomal protein uS12]-hydrogen + (sulfur carrier)-SH + AH2 + 2 S-adenosyl-L-methionine = 3-methylsulfanyl-L-aspartate(89)-[ribosomal protein uS12]-hydrogen + (sulfur carrier)-H + 5'-deoxyadenosine + L-methionine + A + S-adenosyl-L-homocysteine + 2 H(+). Catalyzes the methylthiolation of an aspartic acid residue of ribosomal protein uS12. This Thermus thermophilus (strain ATCC BAA-163 / DSM 7039 / HB27) protein is Ribosomal protein uS12 methylthiotransferase RimO.